The sequence spans 436 residues: Putative ankyrin repeat protein FPV245 (436 aa).

10 ANK repeats span residues Met-1 to Ile-30, Glu-34 to His-63, Lys-67 to Ile-96, Pro-98 to Thr-119, Lys-123 to Ile-152, Asn-156 to Val-185, Tyr-189 to Asn-218, Asn-222 to Val-252, Asp-253 to Ile-283, and Asn-287 to Glu-317.

The sequence is that of Putative ankyrin repeat protein FPV245 from Vertebrata (FPV).